The sequence spans 171 residues: Siroheme decarboxylase NirH subunit (171 aa).

The protein belongs to the Ahb/Nir family. As to quaternary structure, probably forms a complex composed of NirD, NirL, NirG and NirH. All proteins are required for the total conversion of siroheme to didecarboxysiroheme.

It carries out the reaction siroheme + 2 H(+) = 12,18-didecarboxysiroheme + 2 CO2. It functions in the pathway porphyrin-containing compound metabolism. Its function is as follows. Involved in heme d1 biosynthesis. Catalyzes the decarboxylation of siroheme into didecarboxysiroheme. The protein is Siroheme decarboxylase NirH subunit of Pseudomonas aeruginosa (strain ATCC 15692 / DSM 22644 / CIP 104116 / JCM 14847 / LMG 12228 / 1C / PRS 101 / PAO1).